Consider the following 859-residue polypeptide: Toll-like receptor 5 (859 aa).

Positions 1–26 (MACQLDLLIGVIFMASPVLVISPCSS) are cleaved as a signal peptide. The Extracellular segment spans residues 27–641 (DGRIAFFRGC…EEEAMRSLKF (615 aa)). 3 N-linked (GlcNAc...) asparagine glycosylation sites follow: Asn37, Asn46, and Asn84. LRR repeat units follow at residues 45–69 (LNTT…SFPL), 72–94 (RLQL…AFRN), 96–118 (PNLR…AFQG), 121–144 (HLLE…YFRN), 147–167 (SLAR…HSSF), 172–193 (SLSD…ELEP), 198–212 (TLSF…LFSR), 215–230 (VGWE…VRLE), and 235–236 (SE). Asn246 is a glycosylation site (N-linked (GlcNAc...) asparagine). LRR repeat units lie at residues 261 to 285 (LKHH…TFAS), 290 to 302 (SVLQ…GFIF), 314 to 335 (DLKM…AFYG), 338 to 356 (SLQV…YNSN), 386 to 402 (TLQT…AIGF), and 413 to 432 (GNKL…LELS). N-linked (GlcNAc...) asparagine glycosylation occurs at Asn343. A glycan (N-linked (GlcNAc...) asparagine) is linked at Asn438. LRR repeat units lie at residues 450–471 (QLQF…HTPS), 475–496 (SLEQ…GLCW), 504–525 (RLQI…IFND), 528–547 (ALRM…PGSL), and 550–568 (NLEI…DPAL). One can recognise an LRRCT domain in the interval 580-632 (NEFVCNCELSTFISWLNQTNVTLFGSPADVYCMYPNSLLGGSLYNISTEDCDE). 2 cysteine pairs are disulfide-bonded: Cys584/Cys611 and Cys586/Cys630. 3 N-linked (GlcNAc...) asparagine glycosylation sites follow: Asn596, Asn599, and Asn624. The helical transmembrane segment at 642-662 (SLFILCTVTLTLFLVITLVVI) threads the bilayer. Residues 663–859 (KFRGICFLCY…IQLRTIATIS (197 aa)) lie on the Cytoplasmic side of the membrane. One can recognise a TIR domain in the interval 692–837 (YRYDAYFCFS…WFLDKLSGCI (146 aa)). Tyr799 bears the Phosphotyrosine mark.

It belongs to the Toll-like receptor family. In terms of assembly, homodimer. Interacts with MYD88 (via TIR domain). Interacts with TICAM1 (via TIR domain). Interacts with UNC93B1; this interaction is essential for proper TLR5 localization to the plasma membrane. Phosphorylated at Tyr-799 upon flagellin binding; required for signaling. In terms of tissue distribution, highly expressed in liver. Detected in lung and at very low levels in most other tissues.

It is found in the membrane. Its function is as follows. Pattern recognition receptor (PRR) located on the cell surface that participates in the activation of innate immunity and inflammatory response. Recognizes small molecular motifs named pathogen-associated molecular pattern (PAMPs) expressed by pathogens and microbe-associated molecular patterns (MAMPs) usually expressed by resident microbiota. Upon ligand binding such as bacterial flagellins, recruits intracellular adapter proteins MYD88 and TRIF leading to NF-kappa-B activation, cytokine secretion and induction of the inflammatory response. Plays thereby an important role in the relationship between the intestinal epithelium and enteric microbes and contributes to the gut microbiota composition throughout life. The polypeptide is Toll-like receptor 5 (Tlr5) (Mus musculus (Mouse)).